Consider the following 116-residue polypeptide: Nitrogenase iron-iron protein delta chain (116 aa).

In terms of assembly, hexamer of two alpha, two beta, and two delta chains. Iron-sulfur cluster is required as a cofactor.

It catalyses the reaction N2 + 8 reduced [2Fe-2S]-[ferredoxin] + 16 ATP + 16 H2O = H2 + 8 oxidized [2Fe-2S]-[ferredoxin] + 2 NH4(+) + 16 ADP + 16 phosphate + 6 H(+). Its function is as follows. The key enzymatic reactions in nitrogen fixation are catalyzed by the nitrogenase complex, which has 2 components: the iron protein (component 2) and a component 1 which is either a molybdenum-iron protein, a vanadium-iron, or an iron-iron protein. This Rhodospirillum rubrum protein is Nitrogenase iron-iron protein delta chain (anfG).